The following is a 333-amino-acid chain: Putative transporter MamV (333 aa).

A run of 5 helical transmembrane segments spans residues 19–39, 86–106, 111–131, 170–190, and 191–211; these read AWLD…LGVL, FLSA…MLWY, LGSG…LISA, VLAG…LAAI, and LVSL…IHGL.

The protein belongs to the cation diffusion facilitator (CDF) transporter (TC 2.A.4) family.

It is found in the cell inner membrane. Expression of just the minimal mamAB gene cluster (amb0961 to amb0978), including this gene, is sufficient to form a minimal magnetosome chain with small magnetite particles. The sequence is that of Putative transporter MamV from Paramagnetospirillum magneticum (strain ATCC 700264 / AMB-1) (Magnetospirillum magneticum).